We begin with the raw amino-acid sequence, 150 residues long: Lipoprotein signal peptidase (150 aa).

3 helical membrane passes run 5–25 (LSLVIIVVGIIADQVFKNWVV), 59–79 (QQWFFLVLTPIVLIVALWFLW), and 83–103 (GQNWYFAGLTLIIAGALGNFI). Active-site residues include D113 and D129. The helical transmembrane segment at 124–144 (IFNIADILLSVGFVVLFIAIL) threads the bilayer.

It belongs to the peptidase A8 family.

The protein localises to the cell membrane. It carries out the reaction Release of signal peptides from bacterial membrane prolipoproteins. Hydrolyzes -Xaa-Yaa-Zaa-|-(S,diacylglyceryl)Cys-, in which Xaa is hydrophobic (preferably Leu), and Yaa (Ala or Ser) and Zaa (Gly or Ala) have small, neutral side chains.. Its pathway is protein modification; lipoprotein biosynthesis (signal peptide cleavage). This protein specifically catalyzes the removal of signal peptides from prolipoproteins. This chain is Lipoprotein signal peptidase, found in Lactococcus lactis subsp. cremoris (strain MG1363).